A 942-amino-acid chain; its full sequence is UvrABC system protein A (942 aa).

32 to 39 (GLSGSGKS) is an ATP binding site. The C4-type zinc finger occupies 251–278 (CPVCGFTVPELEPRLFSFNAPFGSCPTC). 2 ABC transporter domains span residues 308-589 (WNPI…KKSI) and 609-937 (GNGR…HYLK). 641–648 (GVSGSGKS) lines the ATP pocket. A C4-type zinc finger spans residues 740 to 766 (CEACSGDGIIKIEMHFLPDVYVPCEVC).

It belongs to the ABC transporter superfamily. UvrA family. In terms of assembly, forms a heterotetramer with UvrB during the search for lesions.

It localises to the cytoplasm. The UvrABC repair system catalyzes the recognition and processing of DNA lesions. UvrA is an ATPase and a DNA-binding protein. A damage recognition complex composed of 2 UvrA and 2 UvrB subunits scans DNA for abnormalities. When the presence of a lesion has been verified by UvrB, the UvrA molecules dissociate. The polypeptide is UvrABC system protein A (Streptococcus pyogenes serotype M3 (strain ATCC BAA-595 / MGAS315)).